Consider the following 365-residue polypeptide: MTAAPTLQTIRLAPKALLHDHLDGGLRPATVLDIAGQVGYDDLPATDVDALASWFRTQSHSGSLERYLEPFSHTVAVMQTPEALYRVAFECAQDLAADSVVYAEVRFAPELHISCGLSFDDVVDTVLTGFAAGEKACAADGQPITVRCLVTAMRHAAMSREIAELAIRFRDKGVVGFDIAGAEAGHPPTRHLDAFEYMRDHNARFTIHAGEAFGLPSIHEAIAFCGADRLGHGVRIVDDIDVDADGGFQLGRLAAILRDKRIPLELCPSSNVQTGAVASIAEHPFDLLARARFRVTVNTDNRLMSDTSMSLEMHRLVEAFGYGWSDLARFTVNAMKSAFIPFDQRLAIIDEVIKPRFAALMGHSE.

Zn(2+)-binding residues include histidine 19 and histidine 21. Histidine 21, aspartate 23, and glycine 181 together coordinate substrate. Residue histidine 208 coordinates Zn(2+). Catalysis depends on glutamate 211, which acts as the Proton donor. Aspartate 300 contacts Zn(2+).

It belongs to the metallo-dependent hydrolases superfamily. Adenosine and AMP deaminases family. Adenosine deaminase subfamily. Zn(2+) is required as a cofactor.

The enzyme catalyses adenosine + H2O + H(+) = inosine + NH4(+). It carries out the reaction 2'-deoxyadenosine + H2O + H(+) = 2'-deoxyinosine + NH4(+). Its function is as follows. Catalyzes the hydrolytic deamination of adenosine and 2-deoxyadenosine. This is Adenosine deaminase from Mycobacterium tuberculosis (strain ATCC 25177 / H37Ra).